We begin with the raw amino-acid sequence, 211 residues long: dITP/XTP pyrophosphatase (211 aa).

13–18 (THNPGK) contacts substrate. The Mg(2+) site is built by aspartate 45 and aspartate 74. The Proton acceptor role is filled by aspartate 74. Residues serine 75, 160–163 (FGYD), lysine 183, and 195–196 (HR) contribute to the substrate site.

The protein belongs to the HAM1 NTPase family. In terms of assembly, homodimer. It depends on Mg(2+) as a cofactor.

The catalysed reaction is XTP + H2O = XMP + diphosphate + H(+). It catalyses the reaction dITP + H2O = dIMP + diphosphate + H(+). The enzyme catalyses ITP + H2O = IMP + diphosphate + H(+). Its function is as follows. Pyrophosphatase that catalyzes the hydrolysis of nucleoside triphosphates to their monophosphate derivatives, with a high preference for the non-canonical purine nucleotides XTP (xanthosine triphosphate), dITP (deoxyinosine triphosphate) and ITP. Seems to function as a house-cleaning enzyme that removes non-canonical purine nucleotides from the nucleotide pool, thus preventing their incorporation into DNA/RNA and avoiding chromosomal lesions. The sequence is that of dITP/XTP pyrophosphatase from Bradyrhizobium diazoefficiens (strain JCM 10833 / BCRC 13528 / IAM 13628 / NBRC 14792 / USDA 110).